The primary structure comprises 525 residues: Light-independent protochlorophyllide reductase subunit B (525 aa).

Aspartate 36 contacts [4Fe-4S] cluster. Aspartate 274 functions as the Proton donor in the catalytic mechanism. 409–410 (GL) provides a ligand contact to substrate. Positions 433–464 (HGGKAVAREESPVAPADLAPAATSDTPAAPSP) are disordered. Over residues 444 to 464 (PVAPADLAPAATSDTPAAPSP) the composition is skewed to low complexity.

It belongs to the ChlB/BchB/BchZ family. Protochlorophyllide reductase is composed of three subunits; BchL, BchN and BchB. Forms a heterotetramer of two BchB and two BchN subunits. [4Fe-4S] cluster is required as a cofactor.

The catalysed reaction is chlorophyllide a + oxidized 2[4Fe-4S]-[ferredoxin] + 2 ADP + 2 phosphate = protochlorophyllide a + reduced 2[4Fe-4S]-[ferredoxin] + 2 ATP + 2 H2O. Its pathway is porphyrin-containing compound metabolism; bacteriochlorophyll biosynthesis (light-independent). Its function is as follows. Component of the dark-operative protochlorophyllide reductase (DPOR) that uses Mg-ATP and reduced ferredoxin to reduce ring D of protochlorophyllide (Pchlide) to form chlorophyllide a (Chlide). This reaction is light-independent. The NB-protein (BchN-BchB) is the catalytic component of the complex. The sequence is that of Light-independent protochlorophyllide reductase subunit B from Rhodobacter capsulatus (strain ATCC BAA-309 / NBRC 16581 / SB1003).